A 338-amino-acid chain; its full sequence is Ferrochelatase (338 aa).

2 residues coordinate Fe cation: H202 and E283.

It belongs to the ferrochelatase family.

The protein localises to the cytoplasm. It catalyses the reaction heme b + 2 H(+) = protoporphyrin IX + Fe(2+). It participates in porphyrin-containing compound metabolism; protoheme biosynthesis; protoheme from protoporphyrin-IX: step 1/1. Catalyzes the ferrous insertion into protoporphyrin IX. This is Ferrochelatase from Acinetobacter baumannii (strain AB307-0294).